Consider the following 1486-residue polypeptide: Phosphatidylinositol 3-kinase C2 domain-containing subunit gamma (1486 aa).

One can recognise a PI3K-RBD domain in the interval 285–371 (KTKFNIHIFI…IQLHLQKSRE (87 aa)). The 149-residue stretch at 521–669 (LPSHLSFTVY…SPVTLQIDFP (149 aa)) folds into the C2 PI3K-type domain. The 177-residue stretch at 684–860 (RSNLEEPLKE…QKLLAALQFC (177 aa)) folds into the PIK helical domain. Residues 929–1207 (DHDACSYFTS…KIKESLECFP (279 aa)) enclose the PI3K/PI4K catalytic domain. Residues 935-941 (YFTSNAL) are G-loop. The segment at 1071 to 1079 (GVCDRHNDN) is catalytic loop. The interval 1090–1116 (HIDFGKFLGHAQTFGGIKRDRAPFIFT) is activation loop. The PX domain maps to 1240–1352 (LSTTRSIERA…SFFLSEAVQQ (113 aa)). In terms of domain architecture, C2 spans 1369 to 1486 (KKPKVQLVIS…KWYPLGNSII (118 aa)).

It belongs to the PI3/PI4-kinase family. Highly expressed in liver, prostate and testis. Lower levels in small intestine, kidney and pancreas.

It localises to the membrane. The catalysed reaction is a 1,2-diacyl-sn-glycero-3-phospho-(1D-myo-inositol 4-phosphate) + ATP = a 1,2-diacyl-sn-glycero-3-phospho-(1D-myo-inositol-3,4-bisphosphate) + ADP + H(+). It catalyses the reaction a 1,2-diacyl-sn-glycero-3-phospho-(1D-myo-inositol) + ATP = a 1,2-diacyl-sn-glycero-3-phospho-(1D-myo-inositol-3-phosphate) + ADP + H(+). Generates phosphatidylinositol 3-phosphate (PtdIns3P) and phosphatidylinositol 3,4-bisphosphate (PtdIns(3,4)P2) that act as second messengers. May play a role in SDF1A-stimulated chemotaxis. This chain is Phosphatidylinositol 3-kinase C2 domain-containing subunit gamma (PIK3C2G), found in Homo sapiens (Human).